The following is a 170-amino-acid chain: Ubiquitin-conjugating enzyme E2 G1 (170 aa).

Met-1 carries the N-acetylmethionine modification. Thr-2 is subject to N-acetylthreonine; in Ubiquitin-conjugating enzyme E2 G1, N-terminally processed. The 162-residue stretch at 5 to 166 folds into the UBC core domain; the sequence is QSALLLRRQL…VARCVRKSQE (162 aa). Cys-90 (glycyl thioester intermediate) is an active-site residue.

This sequence belongs to the ubiquitin-conjugating enzyme family. Autoubiquitinated in vitro. In terms of tissue distribution, widely expressed, mainly in skeletal muscle.

The enzyme catalyses S-ubiquitinyl-[E1 ubiquitin-activating enzyme]-L-cysteine + [E2 ubiquitin-conjugating enzyme]-L-cysteine = [E1 ubiquitin-activating enzyme]-L-cysteine + S-ubiquitinyl-[E2 ubiquitin-conjugating enzyme]-L-cysteine.. The protein operates within protein modification; protein ubiquitination. Its function is as follows. Accepts ubiquitin from the E1 complex and catalyzes its covalent attachment to other proteins. In vitro catalyzes 'Lys-48'-, as well as 'Lys-63'-linked polyubiquitination. May be involved in degradation of muscle-specific proteins. Mediates polyubiquitination of CYP3A4. This chain is Ubiquitin-conjugating enzyme E2 G1 (UBE2G1), found in Homo sapiens (Human).